Here is a 432-residue protein sequence, read N- to C-terminus: Histidine--tRNA ligase (432 aa).

Belongs to the class-II aminoacyl-tRNA synthetase family. As to quaternary structure, homodimer.

The protein localises to the cytoplasm. It catalyses the reaction tRNA(His) + L-histidine + ATP = L-histidyl-tRNA(His) + AMP + diphosphate + H(+). This Ralstonia nicotianae (strain ATCC BAA-1114 / GMI1000) (Ralstonia solanacearum) protein is Histidine--tRNA ligase.